The primary structure comprises 275 residues: DNA polymerase II subunit B4 (275 aa).

A DNA-binding region spans residues 11–17 (LPLAIVR). A compositionally biased stretch (low complexity) spans 112 to 122 (ASYPAGGAALK). Positions 112–275 (ASYPAGGAAL…EEVESDEEDE (164 aa)) are disordered. The short motif at 135–142 (KKRKQEEP) is the Nuclear localization signal element. Residues 151–161 (SKIDEETKRND) show a composition bias toward basic and acidic residues. A coiled-coil region spans residues 152–179 (KIDEETKRNDEETENDNTEEENGNDEED). Acidic residues-rich tracts occupy residues 162–237 (EETE…EESG) and 266–275 (EEVESDEEDE).

Belongs to the NFYB/HAP3 subunit family. In terms of assembly, heterotrimeric transcription factor composed of three components, NF-YA, NF-YB and NF-YC. NF-YB and NF-YC must interact and dimerize for NF-YA association and DNA binding. Binds directly with DPB3-1.

The protein resides in the nucleus. Component of the NF-Y/HAP transcription factor complex. The NF-Y complex stimulates the transcription of various genes by recognizing and binding to a CCAAT motif in promoters. In Arabidopsis thaliana (Mouse-ear cress), this protein is DNA polymerase II subunit B4.